The primary structure comprises 270 residues: Imidazole glycerol phosphate synthase subunit HisF (270 aa).

Catalysis depends on residues Asp-11 and Asp-130.

This sequence belongs to the HisA/HisF family. As to quaternary structure, heterodimer of HisH and HisF.

It is found in the cytoplasm. The enzyme catalyses 5-[(5-phospho-1-deoxy-D-ribulos-1-ylimino)methylamino]-1-(5-phospho-beta-D-ribosyl)imidazole-4-carboxamide + L-glutamine = D-erythro-1-(imidazol-4-yl)glycerol 3-phosphate + 5-amino-1-(5-phospho-beta-D-ribosyl)imidazole-4-carboxamide + L-glutamate + H(+). It participates in amino-acid biosynthesis; L-histidine biosynthesis; L-histidine from 5-phospho-alpha-D-ribose 1-diphosphate: step 5/9. Functionally, IGPS catalyzes the conversion of PRFAR and glutamine to IGP, AICAR and glutamate. The HisF subunit catalyzes the cyclization activity that produces IGP and AICAR from PRFAR using the ammonia provided by the HisH subunit. This is Imidazole glycerol phosphate synthase subunit HisF from Sorangium cellulosum (strain So ce56) (Polyangium cellulosum (strain So ce56)).